A 104-amino-acid polypeptide reads, in one-letter code: Large ribosomal subunit protein uL23 (104 aa).

The protein belongs to the universal ribosomal protein uL23 family. In terms of assembly, part of the 50S ribosomal subunit. Contacts protein L29, and trigger factor when it is bound to the ribosome.

Functionally, one of the early assembly proteins it binds 23S rRNA. One of the proteins that surrounds the polypeptide exit tunnel on the outside of the ribosome. Forms the main docking site for trigger factor binding to the ribosome. The protein is Large ribosomal subunit protein uL23 of Leptospira interrogans serogroup Icterohaemorrhagiae serovar copenhageni (strain Fiocruz L1-130).